Reading from the N-terminus, the 291-residue chain is MAITAAMVKELRDSTGAGMMDAKKALTENNGDMEAAVDWLRTKGLAKAAKKSGRTAAEGLVAVKVQGGHGVAVEVNSETDFVGKNADFQKMVAGIADVALGASDIDALRAADMGGKTVEQAVIDAVAVIGENMSVRRMSSIDGENVVSYVHNAAAPGMGKIGVLVATNGGDEAFGKQVAMHIAAVNPASLSEADLDPAVVEKEKQVQMDIARESGKPEQVIEKMIIGRMKKYMSEVTLLNQSFVVNPDLTVGDAAKEAGATITGFVRLEVGEGIEVVKEDFAAEVAKAVKG.

Residues 79-82 are involved in Mg(2+) ion dislocation from EF-Tu; that stretch reads TDFV.

This sequence belongs to the EF-Ts family.

Its subcellular location is the cytoplasm. Functionally, associates with the EF-Tu.GDP complex and induces the exchange of GDP to GTP. It remains bound to the aminoacyl-tRNA.EF-Tu.GTP complex up to the GTP hydrolysis stage on the ribosome. The protein is Elongation factor Ts of Roseobacter denitrificans (strain ATCC 33942 / OCh 114) (Erythrobacter sp. (strain OCh 114)).